The chain runs to 264 residues: uncharacterized protein (264 aa).

13-20 (TGSTSGIG) is an NADP(+) binding site. Serine 141 is a substrate binding site. The active-site Proton acceptor is tyrosine 154.

This sequence belongs to the short-chain dehydrogenases/reductases (SDR) family.

This is an uncharacterized protein from Bacillus subtilis (strain 168).